We begin with the raw amino-acid sequence, 326 residues long: Probable pectate lyase B (326 aa).

The first 15 residues, 1–15 (MRVTAILTLATIAIA), serve as a signal peptide directing secretion. Ca(2+) contacts are provided by aspartate 133, aspartate 162, and aspartate 166. The active site involves arginine 219.

Belongs to the polysaccharide lyase 1 family. The cofactor is Ca(2+).

The protein localises to the secreted. It catalyses the reaction Eliminative cleavage of (1-&gt;4)-alpha-D-galacturonan to give oligosaccharides with 4-deoxy-alpha-D-galact-4-enuronosyl groups at their non-reducing ends.. In terms of biological role, pectinolytic enzyme consist of four classes of enzymes: pectin lyase, polygalacturonase, pectin methylesterase and rhamnogalacturonase. Among pectinolytic enzymes, pectin lyase is the most important in depolymerization of pectin, since it cleaves internal glycosidic bonds of highly methylated pectins. Favors pectate, the anion, over pectin, the methyl ester. The protein is Probable pectate lyase B (plyB) of Aspergillus flavus (strain ATCC 200026 / FGSC A1120 / IAM 13836 / NRRL 3357 / JCM 12722 / SRRC 167).